The chain runs to 84 residues: Small ribosomal subunit protein uS17 (84 aa).

This sequence belongs to the universal ribosomal protein uS17 family. Part of the 30S ribosomal subunit.

In terms of biological role, one of the primary rRNA binding proteins, it binds specifically to the 5'-end of 16S ribosomal RNA. This chain is Small ribosomal subunit protein uS17, found in Aliivibrio fischeri (strain ATCC 700601 / ES114) (Vibrio fischeri).